The primary structure comprises 420 residues: Histidine--tRNA ligase (420 aa).

It belongs to the class-II aminoacyl-tRNA synthetase family. In terms of assembly, homodimer.

It is found in the cytoplasm. The enzyme catalyses tRNA(His) + L-histidine + ATP = L-histidyl-tRNA(His) + AMP + diphosphate + H(+). The polypeptide is Histidine--tRNA ligase (Staphylococcus aureus (strain Mu3 / ATCC 700698)).